Consider the following 478-residue polypeptide: 5-hydroxytryptamine receptor 3A (478 aa).

Residues 1 to 23 (MLLWVQQALLALLLPTLLAQGEA) form the signal peptide. Over 24-241 (RRSRNTTRPA…MKFYVVIRRR (218 aa)) the chain is Extracellular. N-linked (GlcNAc...) asparagine glycans are attached at residues N28, N104, N170, and N186. Residues C157 and C171 are joined by a disulfide bond. A helical membrane pass occupies residues 242-268 (PLFYVVSLLLPSIFLMVMDIVGFYLPP). The Cytoplasmic segment spans residues 269-273 (NSGER). Residues 274-292 (VSFKITLLLGYSVFLIIVS) traverse the membrane as a helical segment. The Extracellular segment spans residues 293 to 302 (DTLPATAIGT). A helical membrane pass occupies residues 303–321 (PLIGVYFVVCMALLVISLA). The Cytoplasmic portion of the chain corresponds to 322–455 (ETIFIVRLVH…GSVLDKLLFH (134 aa)). A disordered region spans residues 389 to 408 (GGPQDFEKSPRDRCSPPPPP). Residues 393 to 402 (DFEKSPRDRC) show a composition bias toward basic and acidic residues. The segment at 414–450 (AVCGLLQELSSIRQFLEKRDEIREVARDWLRVGSVLD) is HA-stretch; determines single-channel conductance in 5-HT3 receptors. The helical transmembrane segment at 456-475 (IYLLAVLAYSITLVMLWSIW) threads the bilayer. Topologically, residues 476 to 478 (QYA) are extracellular.

It belongs to the ligand-gated ion channel (TC 1.A.9) family. 5-hydroxytryptamine receptor (TC 1.A.9.2) subfamily. HTR3A sub-subfamily. In terms of assembly, forms homopentameric as well as heteropentameric serotonin-activated cation-selective channel complexes with HTR3B or HTR3C or HTR3D or HTR3E. The homomeric complex is functional but exhibits low conductance with modified voltage dependence, and decreased agonist and antagonist affinity. Heteropentameric complexes display properties which resemble that of neuronal serotonin-activated channels in vivo. Interacts with RIC3. As to expression, expressed in cerebral cortex, amygdala, hippocampus, and testis. Detected in monocytes of the spleen and tonsil, in small and large intestine, uterus, prostate, ovary and placenta.

Its subcellular location is the postsynaptic cell membrane. The protein localises to the cell membrane. The catalysed reaction is Na(+)(in) = Na(+)(out). The enzyme catalyses K(+)(in) = K(+)(out). It carries out the reaction Ca(2+)(in) = Ca(2+)(out). It catalyses the reaction Mg(2+)(in) = Mg(2+)(out). Forms serotonin (5-hydroxytryptamine/5-HT3)-activated cation-selective channel complexes, which when activated cause fast, depolarizing responses in neurons. This is 5-hydroxytryptamine receptor 3A from Homo sapiens (Human).